The following is a 622-amino-acid chain: 1,4-alpha-glucan branching enzyme GlgB (622 aa).

Asp300 serves as the catalytic Nucleophile. Glu351 serves as the catalytic Proton donor.

It belongs to the glycosyl hydrolase 13 family. GlgB subfamily. As to quaternary structure, monomer.

It catalyses the reaction Transfers a segment of a (1-&gt;4)-alpha-D-glucan chain to a primary hydroxy group in a similar glucan chain.. It functions in the pathway glycan biosynthesis; glycogen biosynthesis. Catalyzes the formation of the alpha-1,6-glucosidic linkages in glycogen by scission of a 1,4-alpha-linked oligosaccharide from growing alpha-1,4-glucan chains and the subsequent attachment of the oligosaccharide to the alpha-1,6 position. In Streptococcus agalactiae serotype V (strain ATCC BAA-611 / 2603 V/R), this protein is 1,4-alpha-glucan branching enzyme GlgB.